Consider the following 220-residue polypeptide: Glycerol-3-phosphate acyltransferase (220 aa).

Transmembrane regions (helical) follow at residues 11–31 (INVI…GYAL), 70–90 (LLIL…SKLF), 96–116 (LQWM…FLNF), 127–147 (GSVV…WFFV), 153–173 (ISSL…FFVP), and 193–213 (MVLI…NLLA).

It belongs to the PlsY family. Probably interacts with PlsX.

It localises to the cell inner membrane. It catalyses the reaction an acyl phosphate + sn-glycerol 3-phosphate = a 1-acyl-sn-glycero-3-phosphate + phosphate. It functions in the pathway lipid metabolism; phospholipid metabolism. Functionally, catalyzes the transfer of an acyl group from acyl-phosphate (acyl-PO(4)) to glycerol-3-phosphate (G3P) to form lysophosphatidic acid (LPA). This enzyme utilizes acyl-phosphate as fatty acyl donor, but not acyl-CoA or acyl-ACP. In Helicobacter acinonychis (strain Sheeba), this protein is Glycerol-3-phosphate acyltransferase.